Reading from the N-terminus, the 445-residue chain is MKIFGTDGVRGKAGVKLTPMFVMRLGIAAGLYFKKHSKTNKILIGKDTRKSGYMVENALVSALTSIGYNVIQIGPMPTPAIAFLTEDMRCDAGIMISASHNPFEDNGIKFFNSYGYKLKEEEEKAIEEIFHDEELLHSSYKVGESVGSAKRIDDVIGRYIVHLKHSFPKHLNLQSLRIVLDTANGAAYKVAPVVFSELGADVLVINDEPNGCNINEQCGALHPNQLSQEVKKYRADLGFAFDGDADRLVVVDNLGNIVHGDKLLGVLGVYQKSKNALSSQAIVATSMSNLALKEYLKSQDLELKHCAIGDKFVSECMQLNKANFGGEQSGHIIFSDYAKTGDGLVCALQVSALVLESKQVSSVALNPFELYPQSLINLNIQKKPPLESLKGYSALLKELDKLEIRHLIRYSGTENKLRILLEAKDEKLLESKMQELKEFFEGHLC.

The active-site Phosphoserine intermediate is the serine 99. Positions 99, 242, 244, and 246 each coordinate Mg(2+). Position 99 is a phosphoserine (serine 99).

The protein belongs to the phosphohexose mutase family. Mg(2+) serves as cofactor. Post-translationally, activated by phosphorylation.

The enzyme catalyses alpha-D-glucosamine 1-phosphate = D-glucosamine 6-phosphate. In terms of biological role, catalyzes the conversion of glucosamine-6-phosphate to glucosamine-1-phosphate. This chain is Phosphoglucosamine mutase, found in Helicobacter pylori (strain Shi470).